A 191-amino-acid chain; its full sequence is Cell division protein SepF (191 aa).

The span at 151 to 164 (SSSPEEASPSSVST) shows a compositional bias: low complexity. Residues 151-191 (SSSPEEASPSSVSTEKTPQYSLGKNTTPEPAWGNSKLSAYS) form a disordered region. A compositionally biased stretch (polar residues) spans 165–178 (EKTPQYSLGKNTTP).

This sequence belongs to the SepF family. As to quaternary structure, homodimer. Interacts with FtsZ.

The protein resides in the cytoplasm. Cell division protein that is part of the divisome complex and is recruited early to the Z-ring. Probably stimulates Z-ring formation, perhaps through the cross-linking of FtsZ protofilaments. Its function overlaps with FtsA. This is Cell division protein SepF from Prochlorococcus marinus (strain MIT 9301).